We begin with the raw amino-acid sequence, 160 residues long: Putative UPF0479 protein YIL177W-A (160 aa).

2 consecutive transmembrane segments (helical) span residues 39-59 (IVFC…KVLQ) and 136-156 (VPMI…ISQH).

It belongs to the UPF0479 family.

The protein localises to the membrane. The protein is Putative UPF0479 protein YIL177W-A of Saccharomyces cerevisiae (strain ATCC 204508 / S288c) (Baker's yeast).